The primary structure comprises 316 residues: uncharacterized protein (316 aa).

Positions 26–98 (ERIDRFLAGA…IPLDVVYEDA (73 aa)) constitute an S4 RNA-binding domain. Residue Asp-148 is part of the active site.

This sequence belongs to the pseudouridine synthase RluA family.

It carries out the reaction a uridine in RNA = a pseudouridine in RNA. This is an uncharacterized protein from Chloroflexus aurantiacus (strain ATCC 29366 / DSM 635 / J-10-fl).